Here is a 588-residue protein sequence, read N- to C-terminus: UvrABC system protein C (588 aa).

One can recognise a GIY-YIG domain in the interval 12-89; that stretch reads SKPGCYLYLN…IKKYRPKYNV (78 aa). Residues 194-229 form the UVR domain; sequence NEVKTLLTNQMHKAAENLQFEEAQRIKEQIISLDFT.

Belongs to the UvrC family. Interacts with UvrB in an incision complex.

Its subcellular location is the cytoplasm. Functionally, the UvrABC repair system catalyzes the recognition and processing of DNA lesions. UvrC both incises the 5' and 3' sides of the lesion. The N-terminal half is responsible for the 3' incision and the C-terminal half is responsible for the 5' incision. In Mesoplasma florum (strain ATCC 33453 / NBRC 100688 / NCTC 11704 / L1) (Acholeplasma florum), this protein is UvrABC system protein C.